We begin with the raw amino-acid sequence, 378 residues long: Chorismate synthase (378 aa).

Positions 42-61 (IQAELDRRRPGQSPITTPRQ) are disordered. Arginine 49 contributes to the NADP(+) binding site. FMN contacts are provided by residues 126–128 (RAS), glycine 287, 302–306 (KPTAT), and arginine 328.

Belongs to the chorismate synthase family. As to quaternary structure, homotetramer. Requires FMNH2 as cofactor.

The enzyme catalyses 5-O-(1-carboxyvinyl)-3-phosphoshikimate = chorismate + phosphate. It participates in metabolic intermediate biosynthesis; chorismate biosynthesis; chorismate from D-erythrose 4-phosphate and phosphoenolpyruvate: step 7/7. In terms of biological role, catalyzes the anti-1,4-elimination of the C-3 phosphate and the C-6 proR hydrogen from 5-enolpyruvylshikimate-3-phosphate (EPSP) to yield chorismate, which is the branch point compound that serves as the starting substrate for the three terminal pathways of aromatic amino acid biosynthesis. This reaction introduces a second double bond into the aromatic ring system. The protein is Chorismate synthase of Synechococcus sp. (strain JA-2-3B'a(2-13)) (Cyanobacteria bacterium Yellowstone B-Prime).